Consider the following 542-residue polypeptide: Phosphoacetylglucosamine mutase (542 aa).

Methionine 1 carries the N-acetylmethionine modification. Threonine 62 carries the post-translational modification Phosphothreonine. Residue serine 64 is the Phosphoserine intermediate of the active site. Residues serine 64, aspartate 276, aspartate 278, and aspartate 280 each contribute to the Mg(2+) site. Phosphoserine is present on serine 64. Substrate contacts are provided by residues 370–372, 496–500, and arginine 505; these read EAN and RPSGT.

It belongs to the phosphohexose mutase family. Mg(2+) serves as cofactor.

The catalysed reaction is N-acetyl-alpha-D-glucosamine 1-phosphate = N-acetyl-D-glucosamine 6-phosphate. Its pathway is nucleotide-sugar biosynthesis; UDP-N-acetyl-alpha-D-glucosamine biosynthesis; N-acetyl-alpha-D-glucosamine 1-phosphate from alpha-D-glucosamine 6-phosphate (route I): step 2/2. Catalyzes the conversion of GlcNAc-6-P into GlcNAc-1-P during the synthesis of uridine diphosphate/UDP-GlcNAc, a sugar nucleotide critical to multiple glycosylation pathways including protein N- and O-glycosylation. This is Phosphoacetylglucosamine mutase from Mus musculus (Mouse).